We begin with the raw amino-acid sequence, 598 residues long: Transcription factor COE3 (598 aa).

Positions 1 to 23 (MFGIQENIPRGGTTMKEEPLGGG) are disordered. Residues 63–66 (RKSN) form an interaction with DNA region. A C5-type zinc finger spans residues 151 to 170 (CRVLLTHEIMCSRCCDKKSC). 2 interaction with DNA regions span residues 197–204 (NCLKNAGN) and 236–239 (NNSK). Positions 264–347 (PCIKAISPSE…KGAPGRFVYT (84 aa)) constitute an IPT/TIG domain. A disordered region spans residues 452–483 (TSQANDQVGYSRNTSSVSPRGYVPSSTPQQSN).

It belongs to the COE family. As to quaternary structure, forms either a homodimer or a heterodimer with a related family member.

It localises to the nucleus. Its function is as follows. Acts as a transcriptional activator. This chain is Transcription factor COE3 (coe3), found in Xenopus laevis (African clawed frog).